The sequence spans 361 residues: Phosphoserine aminotransferase (361 aa).

R42 contributes to the L-glutamate binding site. Pyridoxal 5'-phosphate contacts are provided by residues 76-77, W102, T152, D172, and Q195; that span reads AT. K196 is subject to N6-(pyridoxal phosphate)lysine. A pyridoxal 5'-phosphate-binding site is contributed by 237-238; that stretch reads NT.

This sequence belongs to the class-V pyridoxal-phosphate-dependent aminotransferase family. SerC subfamily. As to quaternary structure, homodimer. Pyridoxal 5'-phosphate is required as a cofactor.

The protein resides in the cytoplasm. It catalyses the reaction O-phospho-L-serine + 2-oxoglutarate = 3-phosphooxypyruvate + L-glutamate. It carries out the reaction 4-(phosphooxy)-L-threonine + 2-oxoglutarate = (R)-3-hydroxy-2-oxo-4-phosphooxybutanoate + L-glutamate. The protein operates within amino-acid biosynthesis; L-serine biosynthesis; L-serine from 3-phospho-D-glycerate: step 2/3. It functions in the pathway cofactor biosynthesis; pyridoxine 5'-phosphate biosynthesis; pyridoxine 5'-phosphate from D-erythrose 4-phosphate: step 3/5. Its function is as follows. Catalyzes the reversible conversion of 3-phosphohydroxypyruvate to phosphoserine and of 3-hydroxy-2-oxo-4-phosphonooxybutanoate to phosphohydroxythreonine. This Xanthomonas axonopodis pv. citri (strain 306) protein is Phosphoserine aminotransferase.